A 494-amino-acid chain; its full sequence is Glycosyl hydrolase family 109 protein (494 aa).

2 disordered regions span residues 1–35 (MNDA…LRTT) and 59–86 (EAAQ…MAGV). The tat-type signal signal peptide spans 1–55 (MNDAAPQNPGQDEAKGTGEKDNGGSMSPRSALRTTAGVAGAGLGLSALGTGTASA). Residues 12–22 (DEAKGTGEKDN) are compositionally biased toward basic and acidic residues. Residues 103–104 (NR), Asp125, 174–177 (WDFH), 194–195 (EC), and Asn223 contribute to the NAD(+) site. Residues Tyr252, Arg271, 283–286 (YPNH), and Tyr365 each bind substrate. Tyr283 serves as a coordination point for NAD(+). The segment at 463–494 (KANGKPQQIPDFTRGEWKKSRPGTDSEKPSEP) is disordered. Residues 475-494 (TRGEWKKSRPGTDSEKPSEP) show a composition bias toward basic and acidic residues.

Belongs to the Gfo/Idh/MocA family. Glycosyl hydrolase 109 subfamily. It depends on NAD(+) as a cofactor. Post-translationally, predicted to be exported by the Tat system. The position of the signal peptide cleavage has not been experimentally proven.

In terms of biological role, glycosidase. This is Glycosyl hydrolase family 109 protein from Streptomyces niveus (Streptomyces spheroides).